Here is a 302-residue protein sequence, read N- to C-terminus: B3 domain-containing protein At3g17010 (302 aa).

Residues 21–116 constitute a DNA-binding region (TF-B3 1); it reads FFKIFQRADL…VFHVNIYEQN (96 aa). A disordered region spans residues 123–192; that stretch reads PRKFQTMGPS…KVKKKSKSKS (70 aa). Basic and acidic residues predominate over residues 135–174; that stretch reads IKKEEGENSLIDVKKEEESDESPGRAEFLVRKKKTEDSKS. Residues 175–192 are compositionally biased toward basic residues; that stretch reads SKKKMTRNKVKKKSKSKS. Positions 199-292 form a DNA-binding region, TF-B3 2; it reads VPEFKITIRK…EFVLLTSKKN (94 aa).

The protein localises to the nucleus. This Arabidopsis thaliana (Mouse-ear cress) protein is B3 domain-containing protein At3g17010.